A 165-amino-acid polypeptide reads, in one-letter code: Lithostathine (165 aa).

The signal sequence occupies residues 1–21 (MTRNKYFILLSCLMVLSPSQG). The residue at position 22 (glutamine 22) is a Pyrrolidone carboxylic acid. In terms of domain architecture, C-type lectin spans 33–163 (ITCPEGSNAY…DAQLSFVCKF (131 aa)). Intrachain disulfides connect cysteine 35-cysteine 46, cysteine 63-cysteine 161, and cysteine 136-cysteine 153. N-linked (GlcNAc...) asparagine glycosylation is present at asparagine 129.

As to expression, expressed only in regenerating islets, but not in normal pancreatic islets, insulinomas or regenerating liver.

The protein localises to the secreted. Functionally, might act as an inhibitor of spontaneous calcium carbonate precipitation. This is Lithostathine (Reg1) from Rattus norvegicus (Rat).